A 272-amino-acid polypeptide reads, in one-letter code: NH(3)-dependent NAD(+) synthetase (272 aa).

An ATP-binding site is contributed by 43–50 (GLSGGQDS). Aspartate 49 is a binding site for Mg(2+). Residue arginine 138 participates in deamido-NAD(+) binding. Residue threonine 158 coordinates ATP. Glutamate 163 serves as a coordination point for Mg(2+). Residues lysine 171 and aspartate 178 each contribute to the deamido-NAD(+) site. Positions 187 and 209 each coordinate ATP. Residue 258–259 (HK) coordinates deamido-NAD(+).

This sequence belongs to the NAD synthetase family. In terms of assembly, homodimer.

It catalyses the reaction deamido-NAD(+) + NH4(+) + ATP = AMP + diphosphate + NAD(+) + H(+). The protein operates within cofactor biosynthesis; NAD(+) biosynthesis; NAD(+) from deamido-NAD(+) (ammonia route): step 1/1. In terms of biological role, catalyzes the ATP-dependent amidation of deamido-NAD to form NAD. Uses ammonia as a nitrogen source. The protein is NH(3)-dependent NAD(+) synthetase of Halalkalibacterium halodurans (strain ATCC BAA-125 / DSM 18197 / FERM 7344 / JCM 9153 / C-125) (Bacillus halodurans).